A 190-amino-acid polypeptide reads, in one-letter code: MARPFAFLMVLVVISYWSTCSLGCDLPQTHNLRNKKILTLLAQMRRLSPLSCLKDRKDFGFPQEKVDAQQIQEAQAIPVLSELTQQILTLFTSKDSSAAWNATLLDSFCTGLHQLLNDLQGCLMQLVGMKELPLTQEDSQLAMKKYFHRITVYLREKKHSPCAWEVVRAEVWRALSSSVNLLARLSEEKE.

The signal sequence occupies residues 1 to 23 (MARPFAFLMVLVVISYWSTCSLG). Cystine bridges form between Cys-24-Cys-122 and Cys-52-Cys-162. An N-linked (GlcNAc...) asparagine glycan is attached at Asn-101.

This sequence belongs to the alpha/beta interferon family.

It localises to the secreted. Its function is as follows. Produced by macrophages, IFN-alpha have antiviral activities. Interferon stimulates the production of two enzymes: a protein kinase and an oligoadenylate synthetase. In Mus musculus (Mouse), this protein is Interferon alpha-9 (Ifna9).